Consider the following 86-residue polypeptide: Large ribosomal subunit protein bL27 (86 aa).

Positions 1–22 are disordered; it reads MATKKAGGSSRNGRDSAGRRLG.

Belongs to the bacterial ribosomal protein bL27 family.

This chain is Large ribosomal subunit protein bL27, found in Rickettsia bellii (strain RML369-C).